A 159-amino-acid chain; its full sequence is uncharacterized protein (159 aa).

The next 4 membrane-spanning stretches (helical) occupy residues 22 to 42 (LFSS…SFTI), 45 to 65 (PIEY…LLTL), 80 to 100 (IWVS…SLSL), and 104 to 124 (FPSL…CLAF).

The protein resides in the membrane. This is an uncharacterized protein from Schizosaccharomyces pombe (strain 972 / ATCC 24843) (Fission yeast).